Consider the following 236-residue polypeptide: Small ribosomal subunit protein eS6 (236 aa).

2 positions are modified to phosphoserine: serine 232 and serine 233.

It belongs to the eukaryotic ribosomal protein eS6 family. In terms of processing, phosphorylated.

The sequence is that of Small ribosomal subunit protein eS6 (RPS6A) from Candida glabrata (strain ATCC 2001 / BCRC 20586 / JCM 3761 / NBRC 0622 / NRRL Y-65 / CBS 138) (Yeast).